A 996-amino-acid polypeptide reads, in one-letter code: Receptor-like protein kinase HSL1 (996 aa).

The signal sequence occupies residues 1–15 (MYLLFLFLLFPTVFS). The Extracellular segment spans residues 16–618 (LNQDGFILQQ…ENEAKKRGYV (603 aa)). LRR repeat units lie at residues 59 to 83 (FSSV…ICRL), 84 to 107 (SNLA…IAAC), 109 to 131 (SLQT…LADI), 133 to 154 (TLVH…SFGK), 155 to 178 (FENL…FLGN), 179 to 203 (ISTL…EFGN), 205 to 228 (TNLE…LGQL), 229 to 252 (SKLV…LGGL), 253 to 276 (TNVV…LGNL), 278 to 299 (SLRL…ELCR), 300 to 323 (VPLE…IALS), 325 to 347 (NLYE…LGLN), 348 to 371 (SPLR…LCAK), 373 to 395 (ELEE…LADC), 396 to 419 (RSLT…FWGL), 421 to 443 (HVNL…IGGA), 444 to 467 (SNLS…IGSL), 468 to 491 (DNLN…LMSL), 493 to 515 (ELGT…IKSW), 516 to 539 (KKLN…IGSL), 541 to 562 (VLNY…SLQS), and 563 to 586 (LKLN…LAKD). Asparagine 93 and asparagine 97 each carry an N-linked (GlcNAc...) asparagine glycan. 4 N-linked (GlcNAc...) asparagine glycosylation sites follow: asparagine 143, asparagine 178, asparagine 186, and asparagine 203. N-linked (GlcNAc...) asparagine glycosylation is present at asparagine 262. 2 N-linked (GlcNAc...) asparagine glycosylation sites follow: asparagine 429 and asparagine 445. The N-linked (GlcNAc...) asparagine glycan is linked to asparagine 569. Residues 619–639 (WLLRSIFVLAAMVLLAGVAWF) form a helical membrane-spanning segment. Over 640 to 996 (YFKYRTFKKA…EDTSDQGSIA (357 aa)) the chain is Cytoplasmic. The region spanning 676–962 (LDEDNVIGAG…RRVVKMLQEI (287 aa)) is the Protein kinase domain. Residues 682–690 (IGAGASGKV) and lysine 704 each bind ATP. Tyrosine 764 and tyrosine 802 each carry phosphotyrosine. The active-site Proton acceptor is the aspartate 815. Serine 851 carries the phosphoserine modification. Residues tyrosine 859 and tyrosine 866 each carry the phosphotyrosine modification. Threonine 867 carries the post-translational modification Phosphothreonine. A disordered region spans residues 967–996 (EDSLHKIRDDKDGKLTPYYNEDTSDQGSIA). Over residues 968-980 (DSLHKIRDDKDGK) the composition is skewed to basic and acidic residues.

This sequence belongs to the protein kinase superfamily. Ser/Thr protein kinase family.

Its subcellular location is the cell membrane. It catalyses the reaction L-seryl-[protein] + ATP = O-phospho-L-seryl-[protein] + ADP + H(+). It carries out the reaction L-threonyl-[protein] + ATP = O-phospho-L-threonyl-[protein] + ADP + H(+). The sequence is that of Receptor-like protein kinase HSL1 (HSL1) from Arabidopsis thaliana (Mouse-ear cress).